The sequence spans 242 residues: MNVDKQRQEAQPAFVLHSYPYLETSLIVEVFTQNSGRIAVVAKGAKRPTSPLRGLLRAFQPLLLSWGGKSELRTLHKAEWQGGQLPLQGTALICGFYLNELLIRLLHRNDPHERLFACYQEALSDLSTASDYIPILRRFEQRLLQEMGYALTLDHDVSSGKPIKPTQMYCYEIERGPIASSNGSCPFNLELSGKTLLDMYQGDYLAPLTRLQSRILMRHLLSHYLGDKPLHTRQLLKEFQQL.

It belongs to the RecO family.

In terms of biological role, involved in DNA repair and RecF pathway recombination. The polypeptide is DNA repair protein RecO (Nitrosospira multiformis (strain ATCC 25196 / NCIMB 11849 / C 71)).